Consider the following 218-residue polypeptide: Probable transaldolase (218 aa).

Lysine 83 serves as the catalytic Schiff-base intermediate with substrate.

This sequence belongs to the transaldolase family. Type 3B subfamily.

The protein localises to the cytoplasm. It carries out the reaction D-sedoheptulose 7-phosphate + D-glyceraldehyde 3-phosphate = D-erythrose 4-phosphate + beta-D-fructose 6-phosphate. It functions in the pathway carbohydrate degradation; pentose phosphate pathway; D-glyceraldehyde 3-phosphate and beta-D-fructose 6-phosphate from D-ribose 5-phosphate and D-xylulose 5-phosphate (non-oxidative stage): step 2/3. In terms of biological role, transaldolase is important for the balance of metabolites in the pentose-phosphate pathway. The chain is Probable transaldolase from Parvibaculum lavamentivorans (strain DS-1 / DSM 13023 / NCIMB 13966).